The following is a 337-amino-acid chain: N-acetyl-gamma-glutamyl-phosphate reductase (337 aa).

Cysteine 149 is a catalytic residue.

This sequence belongs to the NAGSA dehydrogenase family. Type 1 subfamily.

It localises to the cytoplasm. The catalysed reaction is N-acetyl-L-glutamate 5-semialdehyde + phosphate + NADP(+) = N-acetyl-L-glutamyl 5-phosphate + NADPH + H(+). The protein operates within amino-acid biosynthesis; L-arginine biosynthesis; N(2)-acetyl-L-ornithine from L-glutamate: step 3/4. Its function is as follows. Catalyzes the NADPH-dependent reduction of N-acetyl-5-glutamyl phosphate to yield N-acetyl-L-glutamate 5-semialdehyde. This is N-acetyl-gamma-glutamyl-phosphate reductase from Wolinella succinogenes (strain ATCC 29543 / DSM 1740 / CCUG 13145 / JCM 31913 / LMG 7466 / NCTC 11488 / FDC 602W) (Vibrio succinogenes).